The sequence spans 267 residues: Undecaprenyl-diphosphatase (267 aa).

The next 8 helical transmembrane spans lie at 1–21 (MTLFHLILVAAIQGLTEFLPV), 40–60 (GLAIDVAVHVGSLLAVILYFW), 83–103 (AFLALCLIIATIPVMIAGLII), 111–131 (MMRSVAVIGWTMLGFGLVLYW), 144–164 (GWTLKDAFLMGLAQILSLIPG), 189–209 (AMLMSIPTIIASGAVLGADVI), 219–239 (DGALAAALAFVSALLALALMM), and 245–265 (VSFTPYVVYRVILGLILLVYA).

The protein belongs to the UppP family.

Its subcellular location is the cell inner membrane. It catalyses the reaction di-trans,octa-cis-undecaprenyl diphosphate + H2O = di-trans,octa-cis-undecaprenyl phosphate + phosphate + H(+). Catalyzes the dephosphorylation of undecaprenyl diphosphate (UPP). Confers resistance to bacitracin. The protein is Undecaprenyl-diphosphatase of Roseobacter denitrificans (strain ATCC 33942 / OCh 114) (Erythrobacter sp. (strain OCh 114)).